The sequence spans 137 residues: Large ribosomal subunit protein uL16 (137 aa).

This sequence belongs to the universal ribosomal protein uL16 family. Part of the 50S ribosomal subunit.

In terms of biological role, binds 23S rRNA and is also seen to make contacts with the A and possibly P site tRNAs. This chain is Large ribosomal subunit protein uL16, found in Methylobacterium sp. (strain 4-46).